Here is a 1279-residue protein sequence, read N- to C-terminus: ATP-dependent helicase/nuclease subunit A (1279 aa).

One can recognise a UvrD-like helicase ATP-binding domain in the interval 4–499; it reads TKWTDEQRQA…VKLFKNFRSR (496 aa). An ATP-binding site is contributed by 25–32; sequence AGAGAGKT. Positions 526 to 853 constitute a UvrD-like helicase C-terminal domain; the sequence is EEALKVGASY…RIMSIHKSKG (328 aa).

Belongs to the helicase family. AddA subfamily. As to quaternary structure, heterodimer of AddA and AddB/RexB. Mg(2+) serves as cofactor.

It carries out the reaction Couples ATP hydrolysis with the unwinding of duplex DNA by translocating in the 3'-5' direction.. It catalyses the reaction ATP + H2O = ADP + phosphate + H(+). Functionally, the heterodimer acts as both an ATP-dependent DNA helicase and an ATP-dependent, dual-direction single-stranded exonuclease. Recognizes the chi site generating a DNA molecule suitable for the initiation of homologous recombination. The AddA nuclease domain is required for chi fragment generation; this subunit has the helicase and 3' -&gt; 5' nuclease activities. In Clostridium botulinum (strain Langeland / NCTC 10281 / Type F), this protein is ATP-dependent helicase/nuclease subunit A.